A 203-amino-acid chain; its full sequence is Small ribosomal subunit protein uS5 (203 aa).

In terms of domain architecture, S5 DRBM spans 49 to 112; that stretch reads FEERVVKIKR…KNANNNLIKV (64 aa).

Belongs to the universal ribosomal protein uS5 family. In terms of assembly, part of the 30S ribosomal subunit. Contacts proteins S4 and S8.

With S4 and S12 plays an important role in translational accuracy. Functionally, located at the back of the 30S subunit body where it stabilizes the conformation of the head with respect to the body. In Ureaplasma parvum serovar 3 (strain ATCC 700970), this protein is Small ribosomal subunit protein uS5.